We begin with the raw amino-acid sequence, 67 residues long: DNA-directed RNA polymerase subunit omega (67 aa).

Belongs to the RNA polymerase subunit omega family. The RNAP catalytic core consists of 2 alpha, 1 beta, 1 beta' and 1 omega subunit. When a sigma factor is associated with the core the holoenzyme is formed, which can initiate transcription.

It catalyses the reaction RNA(n) + a ribonucleoside 5'-triphosphate = RNA(n+1) + diphosphate. In terms of biological role, promotes RNA polymerase assembly. Latches the N- and C-terminal regions of the beta' subunit thereby facilitating its interaction with the beta and alpha subunits. The chain is DNA-directed RNA polymerase subunit omega from Acidovorax ebreus (strain TPSY) (Diaphorobacter sp. (strain TPSY)).